The sequence spans 239 residues: tRNA (guanine-N(1)-)-methyltransferase (239 aa).

S-adenosyl-L-methionine contacts are provided by residues Gly-110 and 130-135 (VGDYVL).

It belongs to the RNA methyltransferase TrmD family. As to quaternary structure, homodimer.

Its subcellular location is the cytoplasm. It carries out the reaction guanosine(37) in tRNA + S-adenosyl-L-methionine = N(1)-methylguanosine(37) in tRNA + S-adenosyl-L-homocysteine + H(+). Specifically methylates guanosine-37 in various tRNAs. This is tRNA (guanine-N(1)-)-methyltransferase from Borrelia hermsii (strain HS1 / DAH).